The primary structure comprises 422 residues: Tyrosine--tRNA ligase 1 (422 aa).

An L-tyrosine-binding site is contributed by tyrosine 36. Positions proline 41 to histidine 50 match the 'HIGH' region motif. Tyrosine 173 and glutamine 177 together coordinate L-tyrosine. Residues lysine 233–threonine 237 carry the 'KMSKS' region motif. Lysine 236 contributes to the ATP binding site. One can recognise an S4 RNA-binding domain in the interval serine 355–leucine 419.

Belongs to the class-I aminoacyl-tRNA synthetase family. TyrS type 1 subfamily. In terms of assembly, homodimer.

It is found in the cytoplasm. It catalyses the reaction tRNA(Tyr) + L-tyrosine + ATP = L-tyrosyl-tRNA(Tyr) + AMP + diphosphate + H(+). Catalyzes the attachment of tyrosine to tRNA(Tyr) in a two-step reaction: tyrosine is first activated by ATP to form Tyr-AMP and then transferred to the acceptor end of tRNA(Tyr). The protein is Tyrosine--tRNA ligase 1 of Vibrio vulnificus (strain CMCP6).